The following is a 181-amino-acid chain: Large ribosomal subunit protein uL16 (181 aa).

It belongs to the universal ribosomal protein uL16 family.

The chain is Large ribosomal subunit protein uL16 from Pyrococcus abyssi (strain GE5 / Orsay).